The chain runs to 121 residues: Large ribosomal subunit protein bL12 (121 aa).

The protein belongs to the bacterial ribosomal protein bL12 family. In terms of assembly, homodimer. Part of the ribosomal stalk of the 50S ribosomal subunit. Forms a multimeric L10(L12)X complex, where L10 forms an elongated spine to which 2 to 4 L12 dimers bind in a sequential fashion. Binds GTP-bound translation factors.

Forms part of the ribosomal stalk which helps the ribosome interact with GTP-bound translation factors. Is thus essential for accurate translation. The chain is Large ribosomal subunit protein bL12 from Ureaplasma urealyticum serovar 10 (strain ATCC 33699 / Western).